Reading from the N-terminus, the 887-residue chain is Exosome complex component 10 (887 aa).

Positions 1-10 (MAPPSPREHQ) are enriched in basic and acidic residues. The interval 1–23 (MAPPSPREHQSAPATSATKPDAE) is disordered. Lysine 19 is covalently cross-linked (Glycyl lysine isopeptide (Lys-Gly) (interchain with G-Cter in SUMO2)). The region spanning 289 to 455 (HLVSSLDELV…YIYDRMRLEL (167 aa)) is the 3'-5' exonuclease domain. Residues aspartate 313, glutamate 315, aspartate 371, and aspartate 440 each coordinate Mg(2+). In terms of domain architecture, HRDC spans 503 to 583 (NSQQLTAFQL…QQAREMPLLK (81 aa)). Lysine 583 participates in a covalent cross-link: Glycyl lysine isopeptide (Lys-Gly) (interchain with G-Cter in SUMO1); alternate. Lysine 583 is covalently cross-linked (Glycyl lysine isopeptide (Lys-Gly) (interchain with G-Cter in SUMO2); alternate). A Glycyl lysine isopeptide (Lys-Gly) (interchain with G-Cter in SUMO2) cross-link involves residue lysine 710. Disordered regions lie at residues 734–757 (KEPK…AKEE) and 777–887 (NATK…WPKR). Residues 778 to 796 (ATKKRERATSDLRTIEQKQ) show a composition bias toward basic and acidic residues. Serine 823 is modified (phosphoserine). Glycyl lysine isopeptide (Lys-Gly) (interchain with G-Cter in SUMO2) cross-links involve residues lysine 835, lysine 861, and lysine 875.

Belongs to the exosome component 10/RRP6 family. As to quaternary structure, component of the RNA exosome complex. The catalytically inactive RNA exosome core complex (Exo-9) associates with the catalytic subunit EXOSC10/RRP6 (via its N-terminus). Exo-9 may associate with DIS3 to form the nucleolar exosome complex, or DIS3L to form the cytoplasmic exosome complex. The RNA exosome complex interacts with cofactors C1D/RRP47, MPHOSPH6/MPP6 and MTREX/MTR4. Interacts with MTREX; the interaction with MTREX mediates the association of MTREX with nuclear RNA exosomes. Part of the small subunit (SSU) processome, composed of more than 70 proteins and the RNA chaperone small nucleolar RNA (snoRNA) U3. Interacts with ALYREF/THOC4. Interacts with DHX36; this interaction occurs in a RNase-insensitive manner. Interacts with NRDE2. Interacts (via C-terminus) with USP36 (via C-terminus); the interaction is facilitated by the association with RNA and promotes sumoylation of EXOSC10. Requires Mg(2+) as cofactor. In terms of processing, sumoylated by USP36; sumoylation does not significantly affect EXOSC10 nucleolar localization and association with core exosome and USP36, but regulates the nucleolar RNA exosome activity in rRNA processing by promoting binding of EXOSC10 to pre-rRNAs. Effects of sumoylation on EXOSC10 levels vary between different studies. Sumoylation of EXOSC10 is required for the modulation of EXOSC10 effects on cellular protein translation and cell proliferation. Sumoylation is promoted by mild hypothermia. Expressed in ovary (at protein level). Expressed in testis (at protein level). Expressed in lung (at protein level).

It localises to the cytoplasm. The protein localises to the nucleus. Its subcellular location is the nucleolus. It is found in the nucleoplasm. Catalytic component of the RNA exosome complex which has 3'-&gt;5' exoribonuclease activity and participates in a multitude of cellular RNA processing and degradation events. In the nucleus, the RNA exosome complex is involved in proper maturation of stable RNA species such as rRNA, snRNA and snoRNA, in the elimination of RNA processing by-products and non-coding 'pervasive' transcripts, such as antisense RNA species and promoter-upstream transcripts (PROMPTs), and of mRNAs with processing defects, thereby limiting or excluding their export to the cytoplasm. Part of the small subunit (SSU) processome, first precursor of the small eukaryotic ribosomal subunit. During the assembly of the SSU processome in the nucleolus, many ribosome biogenesis factors, an RNA chaperone and ribosomal proteins associate with the nascent pre-rRNA and work in concert to generate RNA folding, modifications, rearrangements and cleavage as well as targeted degradation of pre-ribosomal RNA by the RNA exosome. The RNA exosome may be involved in Ig class switch recombination (CSR) and/or Ig variable region somatic hypermutation (SHM) by targeting AICDA deamination activity to transcribed dsDNA substrates. In the cytoplasm, the RNA exosome complex is involved in general mRNA turnover and specifically degrades inherently unstable mRNAs containing AU-rich elements (AREs) within their 3' untranslated regions, and in RNA surveillance pathways, preventing translation of aberrant mRNAs. It seems to be involved in degradation of histone mRNA. EXOSC10 is required for nucleolar localization of C1D and probably mediates the association of MTREX, C1D and MPHOSPH6 with the RNA exosome involved in the maturation of 5.8S rRNA. Plays a role in the recruitment of replication protein A complex (RPA) and RAD51 to DNA double-strand breaks caused by irradiation, contributing to DNA repair by homologous recombination. Regulates levels of damage-induced RNAs in order to prevent DNA-RNA hybrid formation at DNA double-strand breaks and limit DNA end resection after damage. Plays a role in oocyte development, maturation and survival. Required for normal testis development and mitotic division of spermatogonia. Plays a role in proper embryo development. Required for global protein translation. Required for cell proliferation. The polypeptide is Exosome complex component 10 (Exosc10) (Mus musculus (Mouse)).